The chain runs to 279 residues: Acetyl-coenzyme A carboxylase carboxyl transferase subunit beta (279 aa).

One can recognise a CoA carboxyltransferase N-terminal domain in the interval 27–279; that stretch reads LFLACPYCGT…IVKLHHRTEI (253 aa). 4 residues coordinate Zn(2+): cysteine 31, cysteine 34, cysteine 49, and cysteine 52. The C4-type zinc-finger motif lies at 31 to 52; it reads CPYCGTQMYNKQLGDYRVCAKC.

Belongs to the AccD/PCCB family. Acetyl-CoA carboxylase is a heterohexamer composed of biotin carboxyl carrier protein (AccB), biotin carboxylase (AccC) and two subunits each of ACCase subunit alpha (AccA) and ACCase subunit beta (AccD). Zn(2+) is required as a cofactor.

It is found in the cytoplasm. It catalyses the reaction N(6)-carboxybiotinyl-L-lysyl-[protein] + acetyl-CoA = N(6)-biotinyl-L-lysyl-[protein] + malonyl-CoA. The protein operates within lipid metabolism; malonyl-CoA biosynthesis; malonyl-CoA from acetyl-CoA: step 1/1. Component of the acetyl coenzyme A carboxylase (ACC) complex. Biotin carboxylase (BC) catalyzes the carboxylation of biotin on its carrier protein (BCCP) and then the CO(2) group is transferred by the transcarboxylase to acetyl-CoA to form malonyl-CoA. This chain is Acetyl-coenzyme A carboxylase carboxyl transferase subunit beta, found in Leuconostoc citreum (strain KM20).